Consider the following 243-residue polypeptide: Membrane selenoprotein (243 aa).

The tract at residues 12–63 (GEDCEGGVUARPSSSSSSINNASDESTPLISKTNDEEKANIGISSTSNSPQE) is disordered. A non-standard amino acid (selenocysteine) is located at residue selenocysteine 20. Composition is skewed to polar residues over residues 30 to 43 (INNA…LISK) and 53 to 63 (GISSTSNSPQE). Transmembrane regions (helical) follow at residues 74–94 (ILTL…PVLI), 102–122 (VSAG…LSIL), 144–164 (IKFG…FDIL), and 199–219 (VMGW…LLVG). A non-standard amino acid (selenocysteine) is located at residue selenocysteine 88.

The protein localises to the membrane. The polypeptide is Membrane selenoprotein (msp) (Dictyostelium discoideum (Social amoeba)).